The sequence spans 153 residues: Endoribonuclease YbeY (153 aa).

Histidine 113, histidine 117, and histidine 123 together coordinate Zn(2+).

It belongs to the endoribonuclease YbeY family. Requires Zn(2+) as cofactor.

It is found in the cytoplasm. In terms of biological role, single strand-specific metallo-endoribonuclease involved in late-stage 70S ribosome quality control and in maturation of the 3' terminus of the 16S rRNA. This Aliivibrio fischeri (strain MJ11) (Vibrio fischeri) protein is Endoribonuclease YbeY.